A 268-amino-acid chain; its full sequence is Eukaryotic translation initiation factor 3 subunit J (268 aa).

Disordered regions lie at residues 1 to 27 (MSWD…DDEF), 40 to 63 (DAEE…KVDK), and 217 to 249 (LAKV…KKDQ). Positions 47–58 (QKQKPKAAPKAA) are enriched in basic residues. Residues 191–221 (IESIRQTVATLNVLIKEKERQERQARLAKVK) adopt a coiled-coil conformation.

It belongs to the eIF-3 subunit J family. Component of the eukaryotic translation initiation factor 3 (eIF-3) complex.

It is found in the cytoplasm. Functionally, component of the eukaryotic translation initiation factor 3 (eIF-3) complex, which is involved in protein synthesis of a specialized repertoire of mRNAs and, together with other initiation factors, stimulates binding of mRNA and methionyl-tRNAi to the 40S ribosome. The eIF-3 complex specifically targets and initiates translation of a subset of mRNAs involved in cell proliferation. This is Eukaryotic translation initiation factor 3 subunit J from Eremothecium gossypii (strain ATCC 10895 / CBS 109.51 / FGSC 9923 / NRRL Y-1056) (Yeast).